The primary structure comprises 259 residues: NAP1-related protein 1 (259 aa).

Positions 1–15 (MAAAEQKGKKPRTDG) are enriched in basic and acidic residues. The disordered stretch occupies residues 1-20 (MAAAEQKGKKPRTDGAEAEP). A coiled-coil region spans residues 21–62 (VDAALLQSIEKLQEIQDEIEKVNEEACDKVLELEQKYNEVRR). Residues 228–259 (ELLDDDDEVSDDDDEEEDDEDQGEGEEDGEEN) form a disordered region.

It belongs to the nucleosome assembly protein (NAP) family.

It localises to the nucleus. Its subcellular location is the cytoplasm. In terms of biological role, acts as a histone H2A/H2B chaperone in nucleosome assembly. The protein is NAP1-related protein 1 of Oryza sativa subsp. indica (Rice).